The following is a 626-amino-acid chain: MIPANASARKGPEGKYPLHYLVWHNRHRELEKEVRAGQVDIEQLDPRGRTPLHLATTLGHLECARVLLAHGADVGRENRSGWTVLQEAVSTRDLELVQLVLRYRDYQRVVKRLAGIPMLLEKLRKAQDFYVEMKWEFTSWVPLVSKICPSDTYKVWKSGQNLRVDTTLLGFDHMTWQRGNRSFVFRGQDTSAVVMEIDHDRRVVYMETLALAGQDRELLLAAAQPSEEQVLSRLTAPVVTTQLDTKNISFERNKTGILGWRSEKTEMVNGYEAKVYGASNVELITRTRTEHLSEQHKGKVKGCKTPLQSFLGIAEQHGGPQNGTLITQTLSQANPPAITAEEYFNPNFELGNRAMGRPMELTTKTQKFKAKLWLCEEHPLSLCEQVAPIIDLMAVSNALFAKLRDFITLRLPPGFPVKIEIPIFHILNARITFGNLNGCDEPVPSVRGSPGSETPSPGSDSSSVSSSSSTTSCRACEISPALFEAPRGYSVLGGQREAVPRDEDDDLLRFAIQQSLLEAGSEYDQVTIWEALTNSKPGTHPMSYEGRRQDRSAPPTPQRQPMPPAPVPSPRPSPGPGSSSHVFRSYDEQLRLAMELSAQEQEERRRRVRQEEEELERILRLSLTEQ.

Met-1 carries the post-translational modification N-acetylmethionine. ANK repeat units follow at residues 47-76 and 80-109; these read RGRT…DVGR and SGWT…YQRV. The disordered stretch occupies residues 442 to 470; sequence PVPSVRGSPGSETPSPGSDSSSVSSSSST. A compositionally biased stretch (low complexity) spans 448–470; the sequence is GSPGSETPSPGSDSSSVSSSSST. One can recognise a UIM 1 domain in the interval 503-522; it reads EDDDLLRFAIQQSLLEAGSE. Residues 534 to 614 form a disordered region; that stretch reads NSKPGTHPMS…RRRVRQEEEE (81 aa). Pro residues predominate over residues 554-575; the sequence is PPTPQRQPMPPAPVPSPRPSPG. 2 UIM domains span residues 585 to 604 and 610 to 626; these read SYDE…QEER and QEEE…LTEQ.

Interacts with EGFR (ubiquitinated); the interaction is direct and may regulate EGFR internalization.

Its subcellular location is the cell membrane. The protein resides in the late endosome. It is found in the early endosome. Ubiquitin-binding protein that specifically recognizes and binds 'Lys-63'-linked ubiquitin. Does not bind 'Lys-48'-linked ubiquitin. Positively regulates the internalization of ligand-activated EGFR by binding to the Ub moiety of ubiquitinated EGFR at the cell membrane. In Mus musculus (Mouse), this protein is Ankyrin repeat domain-containing protein 13B (Ankrd13b).